The primary structure comprises 119 residues: Ribonuclease P protein component (119 aa).

The protein belongs to the RnpA family. In terms of assembly, consists of a catalytic RNA component (M1 or rnpB) and a protein subunit.

It carries out the reaction Endonucleolytic cleavage of RNA, removing 5'-extranucleotides from tRNA precursor.. Its function is as follows. RNaseP catalyzes the removal of the 5'-leader sequence from pre-tRNA to produce the mature 5'-terminus. It can also cleave other RNA substrates such as 4.5S RNA. The protein component plays an auxiliary but essential role in vivo by binding to the 5'-leader sequence and broadening the substrate specificity of the ribozyme. The polypeptide is Ribonuclease P protein component (Escherichia coli O157:H7).